A 114-amino-acid polypeptide reads, in one-letter code: Cystatin Pr15a (114 aa).

The signal sequence occupies residues 1–22; sequence MFTVKLLAFMVVAVSLQHLAEA. Residues 29–83 enclose the Cystatin domain; sequence GCPVEVDPNREDIKKSLAHVMAAKNSPDELVRIIKASTQVVNGIKYKVVFEVKNP.

Belongs to the cystatin family. Expressed by the venom gland (anterior main gland) (at protein level).

The protein localises to the secreted. This Platymeris rhadamanthus (Red spot assassin bug) protein is Cystatin Pr15a.